The following is a 320-amino-acid chain: Acetyl-coenzyme A carboxylase carboxyl transferase subunit alpha (320 aa).

In terms of domain architecture, CoA carboxyltransferase C-terminal spans Ile42–Glu295.

It belongs to the AccA family. As to quaternary structure, acetyl-CoA carboxylase is a heterohexamer composed of biotin carboxyl carrier protein (AccB), biotin carboxylase (AccC) and two subunits each of ACCase subunit alpha (AccA) and ACCase subunit beta (AccD).

It is found in the cytoplasm. It carries out the reaction N(6)-carboxybiotinyl-L-lysyl-[protein] + acetyl-CoA = N(6)-biotinyl-L-lysyl-[protein] + malonyl-CoA. It participates in lipid metabolism; malonyl-CoA biosynthesis; malonyl-CoA from acetyl-CoA: step 1/1. Functionally, component of the acetyl coenzyme A carboxylase (ACC) complex. First, biotin carboxylase catalyzes the carboxylation of biotin on its carrier protein (BCCP) and then the CO(2) group is transferred by the carboxyltransferase to acetyl-CoA to form malonyl-CoA. This chain is Acetyl-coenzyme A carboxylase carboxyl transferase subunit alpha, found in Rhodopseudomonas palustris (strain HaA2).